The sequence spans 393 residues: Staphopain B (393 aa).

Positions 1-36 (MNSSYKSRVFNIISIIMVSMLILSLGAFANNNKAKA) are cleaved as a signal peptide. Residues 37–219 (DSHSKQLEIN…KVEENEAIQE (183 aa)) constitute a propeptide that is removed on maturation. Residues C243, H340, and N360 contribute to the active site.

The protein belongs to the peptidase C47 family. In the cytoplasm, prematurely activated/folded SspB forms a stable non-covalent complex with SspC. In terms of processing, proteolytically cleaved by staphylococcal serine protease (SspA).

Its subcellular location is the secreted. Its activity is regulated as follows. Prematurely activated/folded staphopain B is inhibited by staphostatin B (SspC), which is probably required to protect staphylococcal cytoplasmic proteins from degradation by SspB. In terms of biological role, cysteine protease that plays an important role in the inhibition of host innate immune response. Degrades host elastin, fibrogen, fibronectin and kininogen. Blocks phagocytosis of opsonised S.aureus by neutrophils and monocytes by inducing their death in a proteolytic activity-dependent manner. Decreases surface expression of the 'don't eat me' signal CD31 on neutrophils. Cleaves host galectin-3/LGALS3, thereby inhibiting the neutrophil-activating ability of the lectin. This chain is Staphopain B (sspB), found in Staphylococcus aureus (strain Mu50 / ATCC 700699).